The primary structure comprises 210 residues: UPF0502 protein Sama_1967 (210 aa).

The protein belongs to the UPF0502 family.

The sequence is that of UPF0502 protein Sama_1967 from Shewanella amazonensis (strain ATCC BAA-1098 / SB2B).